We begin with the raw amino-acid sequence, 411 residues long: Copper resistance protein CRF1 (411 aa).

Positions 1 to 40 form a DNA-binding region, copper-fist; that stretch reads MVVIEGIKYACERCIRGHRVSSCTHTQQPLIRIKPKGRPA. Residues Cys11, Cys14, Cys23, and His25 each coordinate Zn(2+). 4 stretches are compositionally biased toward low complexity: residues 115–190, 205–214, 227–241, and 350–370; these read QQQA…PHSP, SSSSLSSLHS, SHNS…ANSP, and SVAA…PPSS. 2 disordered regions span residues 115–241 and 348–389; these read QQQA…ANSP and EMSV…VSPA.

The protein resides in the nucleus. In terms of biological role, transcriptional regulator involved in resistance to high copper concentration. This Yarrowia lipolytica (strain CLIB 122 / E 150) (Yeast) protein is Copper resistance protein CRF1 (CRF1).